The chain runs to 166 residues: MMKFMCLFVCAIAAVSASDYGNVGYGRVPVGGLAYQVQPALTVSSIVPVGGYGGGYGGGRGYGRGYGRSVEVPVAAVWTPNSRYGVAPVDRQALGLAKLSLAAPGAGGPLVLNEPRRIIKVSGYGPQRGYKQPLGYGSIEQAQGASAAAASSSVAGQNKGYQNGGY.

Positions 1-17 are cleaved as a signal peptide; that stretch reads MMKFMCLFVCAIAAVSA.

This sequence belongs to the chorion protein S15/S18 family.

The protein localises to the secreted. Its function is as follows. Chorion membrane (egg shell) protein; plays a role in protecting the egg from the environment. The polypeptide is Chorion protein S18 (Cp18) (Drosophila grimshawi (Hawaiian fruit fly)).